A 280-amino-acid polypeptide reads, in one-letter code: ATP synthase subunit a (280 aa).

7 helical membrane passes run 45-65 (AINV…LFLF), 105-125 (LVAP…LMDL), 126-146 (LPVD…LKVV), 159-179 (LSIF…GGFF), 190-210 (FLFP…PISL), 223-243 (MIFI…LFGG), and 250-270 (AVFH…LTIV).

It belongs to the ATPase A chain family. In terms of assembly, F-type ATPases have 2 components, CF(1) - the catalytic core - and CF(0) - the membrane proton channel. CF(1) has five subunits: alpha(3), beta(3), gamma(1), delta(1), epsilon(1). CF(0) has three main subunits: a(1), b(2) and c(9-12). The alpha and beta chains form an alternating ring which encloses part of the gamma chain. CF(1) is attached to CF(0) by a central stalk formed by the gamma and epsilon chains, while a peripheral stalk is formed by the delta and b chains.

It localises to the cell inner membrane. Key component of the proton channel; it plays a direct role in the translocation of protons across the membrane. This Thiobacillus denitrificans (strain ATCC 25259 / T1) protein is ATP synthase subunit a.